Here is a 136-residue protein sequence, read N- to C-terminus: Small ribosomal subunit protein uS8c (136 aa).

The protein belongs to the universal ribosomal protein uS8 family. Part of the 30S ribosomal subunit.

It is found in the plastid. It localises to the chloroplast. In terms of biological role, one of the primary rRNA binding proteins, it binds directly to 16S rRNA central domain where it helps coordinate assembly of the platform of the 30S subunit. This chain is Small ribosomal subunit protein uS8c (rps8), found in Hordeum vulgare (Barley).